The sequence spans 440 residues: Cysteine proteinase (440 aa).

A signal peptide spans 1 to 60 (MYSSSVVSNPNERLVNNRVENDLESSDDTLSTQAKPVSRLLTRKLLLGVVVLFFLAGVSV). Positions 61-229 (VSYFLFSKYK…DEDVDLAKLT (169 aa)) are cleaved as a propeptide — activation peptide. The segment at 166-182 (VKGINRFSDLTEREFYK) is involved in processing to yield active enzymes. Asparagine 206 carries N-linked (GlcNAc...) asparagine glycosylation. A disulfide bridge connects residues cysteine 250 and cysteine 291. Active-site residues include cysteine 253, histidine 382, and asparagine 404.

It belongs to the peptidase C1 family.

The polypeptide is Cysteine proteinase (Theileria parva (East coast fever infection agent)).